Here is a 261-residue protein sequence, read N- to C-terminus: Glucosamine-6-phosphate deaminase (261 aa).

The active-site Proton acceptor; for enolization step is the Asp67. The active-site For ring-opening step is the Asp136. Residue His138 is the Proton acceptor; for ring-opening step of the active site. The active-site For ring-opening step is the Glu143.

The protein belongs to the glucosamine/galactosamine-6-phosphate isomerase family. NagB subfamily.

The enzyme catalyses alpha-D-glucosamine 6-phosphate + H2O = beta-D-fructose 6-phosphate + NH4(+). It functions in the pathway amino-sugar metabolism; N-acetylneuraminate degradation; D-fructose 6-phosphate from N-acetylneuraminate: step 5/5. Functionally, catalyzes the reversible isomerization-deamination of glucosamine 6-phosphate (GlcN6P) to form fructose 6-phosphate (Fru6P) and ammonium ion. This chain is Glucosamine-6-phosphate deaminase, found in Streptomyces coelicolor (strain ATCC BAA-471 / A3(2) / M145).